The following is a 1020-amino-acid chain: Nucleotide-binding oligomerization domain-containing protein 2 (1020 aa).

CARD domains lie at 6–104 and 106–200; these read CDMC…GSWD and HSLH…AECQ. Residues 43–57 carry the ATG16L1-binding motif motif; that stretch reads WDVLSREDYEGLSLP. ADP is bound by residues threonine 219, tyrosine 232, threonine 233, glycine 282, serine 283, glycine 284, lysine 285, serine 286, and threonine 287. The segment at 221 to 254 is required for CARD9 binding; it reads DGSENLCLEDIYTENILELQTEVGTAGALQKSPA. One can recognise an NACHT domain in the interval 273 to 600; that stretch reads DTILVVGEAG…AAFYLAVSAD (328 aa). Cysteine 375 is lipidated: S-palmitoyl cysteine. Histidine 583 is an ADP binding site. LRR repeat units follow at residues 685-709, 726-749, 766-792, 794-817, 822-845, 850-873, 906-929, 934-962, 963-985, and 1005-1019; these read ARAR…VPGE, LYEM…HLKL, LQHL…QLRP, LGVC…TLVE, CEQL…SMAK, KQNF…VLAQ, HQNL…ALAL, NKSL…LKRN, STLK…ALLQ, and LEEI…ARLL.

Belongs to the NOD1-NOD2 family. As to quaternary structure, homooligomer: homooligomerizes following muramyl dipeptide (MDP)-binding, promoting RIPK2 recruitment. Interacts (via CARD domain) with RIPK2 (via CARD domain). Following RIPK2 recruitment, RIPK2 homooligomerizes via its CARD domain and forms long filaments named RIPosomes. Interacts (via CARD domain) with ubiquitin; inhibiting interaction with RIPK2. Component of a signaling complex consisting of ARHGEF2, NOD2 and RIPK2. Interacts with ANKRD17 (via N-terminus). Interacts with HSPA1A; the interaction enhances NOD2 stability. Interacts (via both CARD domains) with HSP90; the interaction enhances NOD2 stability. Interacts (via CARD domain) with SOCS3; the interaction promotes NOD2 degradation. Interacts (via CARD domain) with ERBIN; the interaction inhibits activation of NOD2. Interacts with MAPKBP1; the interaction is enhanced in the presence of muramyl dipeptide (MDP) and inhibits NOD2 homooligomerization and activation. Interacts with INAVA; the interaction takes place upon Pattern recognition receptor (PRR) stimulation. Interacts (via NACHT domain) with CARD9. Interacts (via CARD domain) with CASP1; this interaction leads to IL1B processing. Also interacts with CASP4. Interacts with NLRP1; this interaction is enhanced in the presence of muramyl dipeptide (MDP) and leads to increased IL1B release. Interacts with NLRP12; this interaction promotes degradation of NOD2 through the ubiquitin-proteasome pathway. Interacts with ANKHD1, C10orf67, CHMP5, DOCK7, ENTR1, KRT15, LDOC1, PPP1R12C, PPP2R3B, TRIM41 and VIM. Interacts with MAVS; interaction takes place following single-stranded RNA (ssRNA)-binding. Interacts with ATG16L1. Interacts with Irgm1; promoting Irgm1 'Lys-63'-linked polyubiquitination, which is required for interactions with the core autophagy factors. Palmitoylated by ZDHHC5; palmitoylation is required for proper recruitment to the bacterial entry site and hence for proper signaling upon cognate peptidoglycan detection. Palmitoylation promotes localization to the cell membrane. Palmitoylation protects from SQSTM1/p62-dependent autophagic degradation. Post-translationally, polyubiquitinated by TRIM27, leading to proteasome-mediated degradation. Polyubiquitinated and degraded following muramyl dipeptide (MDP) stimulation, conferring MDP tolerance and preventing septic shock. In terms of processing, degraded via selective autophagy following interaction with Irgm1. Irgm1 promotes NOD2-RIPK2 RIPosome recruitment to autophagosome membranes, promoting their SQSTM1/p62-dependent autophagic degradation. O-glycosylated by OGT, O-GlcNAcylation increases protein stability. As to expression, expressed in monocytes, macrophages, dendritic cells, hepatocytes, preadipocytes, epithelial cells of oral cavity, lung and intestine. In intestine, highly expressed in ileal Paneth cells of the crypt and in intestinal stem cells. Also expressed in neurons of several brain regions including the hypothalamus.

The protein localises to the cell membrane. Its subcellular location is the basolateral cell membrane. It is found in the cytoplasm. The protein resides in the mitochondrion. Its activity is regulated as follows. ADP-binding promotes an inactive closed conformation. Pattern recognition receptor (PRR) that detects bacterial peptidoglycan fragments and other danger signals and plays an important role in gastrointestinal immunity. Specifically activated by muramyl dipeptide (MDP), a fragment of bacterial peptidoglycan found in every bacterial peptidoglycan type. NOD2 specifically recognizes and binds 6-O-phospho-MDP, the phosphorylated form of MDP, which is generated by NAGK. 6-O-phospho-MDP-binding triggers oligomerization that facilitates the binding and subsequent activation of the proximal adapter receptor-interacting RIPK2. Following recruitment, RIPK2 undergoes 'Met-1'- (linear) and 'Lys-63'-linked polyubiquitination by E3 ubiquitin-protein ligases XIAP, BIRC2, BIRC3 and the LUBAC complex, becoming a scaffolding protein for downstream effectors, triggering activation of the NF-kappa-B and MAP kinases signaling. This in turn leads to the transcriptional activation of hundreds of genes involved in immune response. Its ability to detect bacterial MDP plays a central role in maintaining the equilibrium between intestinal microbiota and host immune responses to control inflammation. An imbalance in this relationship results in dysbiosis, whereby pathogenic bacteria prevail on commensals, causing damage in the intestinal epithelial barrier as well as allowing bacterial invasion and inflammation. Acts as a regulator of appetite by sensing MDP in a subset of brain neurons: microbiota-derived MDP reach the brain, where they bind and activate NOD2 in inhibitory hypothalamic neurons, decreasing neuronal activity, thereby regulating satiety and body temperature. NOD2-dependent MDP-sensing of bacterial cell walls in the intestinal epithelial compartment contributes to sustained postnatal growth upon undernutrition. Also plays a role in antiviral response by acting as a sensor of single-stranded RNA (ssRNA) from viruses: upon ssRNA-binding, interacts with MAVS, leading to activation of interferon regulatory factor-3/IRF3 and expression of type I interferon. Also acts as a regulator of autophagy in dendritic cells via its interaction with ATG16L1, possibly by recruiting ATG16L1 at the site of bacterial entry. NOD2 activation in the small intestine crypt also contributes to intestinal stem cells survival and function: acts by promoting mitophagy via its association with ATG16L1. In addition to its main role in innate immunity, also regulates the adaptive immune system by acting as regulator of helper T-cell and regulatory T-cells (Tregs). Besides recognizing pathogens, also involved in the endoplasmic reticulum stress response: acts by sensing and binding to the cytosolic metabolite sphingosine-1-phosphate generated in response to endoplasmic reticulum stress, initiating an inflammation process that leads to activation of the NF-kappa-B and MAP kinases signaling. May also be involved in NLRP1 activation following activation by MDP, leading to CASP1 activation and IL1B release in macrophages. In Mus musculus (Mouse), this protein is Nucleotide-binding oligomerization domain-containing protein 2.